A 592-amino-acid chain; its full sequence is Inactive glycosyltransferase 25 family member 3 (592 aa).

The N-terminal stretch at 1–19 is a signal peptide; sequence MHVARLLPLLLLLGQQLRA. 4 N-linked (GlcNAc...) asparagine glycosylation sites follow: N72, N150, N234, and N357. Residues 540-592 are disordered; it reads AEWLSDTETSSPWDDDSGRLISQTGSQKALRGPHLHLTGSSGHSLHPHHRDEL. A Prevents secretion from ER motif is present at residues 589–592; that stretch reads RDEL.

The protein belongs to the glycosyltransferase 25 family.

It is found in the endoplasmic reticulum lumen. Probable cell adhesion protein involved in leukocyte transmigration across the blood-brain barrier. Does not express any beta-galactosyltransferase activity in vitro. The chain is Inactive glycosyltransferase 25 family member 3 (Cercam) from Mus musculus (Mouse).